A 530-amino-acid polypeptide reads, in one-letter code: MSINHFNNNKNNNNKNNKNNEENFWDNTQCNNDRNKFSIDNIINSNYPTANTTTITSTTNQTIQNNVLNSINIKNNESLKNIYYDENLQRKLTSINFLKNLCSVRDQPFNFNEHIKSIQSINSYRKCISNEIFKKNLINNQLSDILIIIEITSFIGDCIFEIFYLNYFQETLEKDILLFSNASETICIPSHHSPSPQFPVYYTENINNATPSTVVSNSPNNYSQPISPQSSQSTTPTIISSNSPLKTRNKNNNNNYNNNNNNNNNNNNNNNNNNNNSNNNNNNNNYFNNNKKNKIGDCNSNNSNNNNNNNHNNNNNNNNYNYNNNNNNNNNNNNNNNNNNNNNNNNNNNNNNNNNNNNNSNNNKNNNNINNNNNNNNNNNNNINNNNNNNSINNIINNNNNFNNNNINNNLFNNNSMNYNKKENYNWESSSSEEDNNNLIKEQSVKKNETVKKQYIPRKSKYVNYERIKKVSLSKSVEPFDTMKRMEKKKPGNCSMCNIKESISWIKTMVNGQLCNACGLKAIRQIKIEN.

Disordered regions lie at residues 1–27 and 212–386; these read MSINHFNNNKNNNNKNNKNNEENFWDN and STVV…INNN. Low complexity-rich tracts occupy residues 7–17, 216–290, and 299–386; these read NNNKNNNNKNN, SNSP…FNNN, and NSNN…INNN. The segment at 494–518 adopts a GATA-type zinc-finger fold; the sequence is CSMCNIKESISWIKTMVNGQLCNAC.

This chain is GATA zinc finger domain-containing protein 4 (gtaD), found in Dictyostelium discoideum (Social amoeba).